A 315-amino-acid chain; its full sequence is Ribosomal RNA small subunit methyltransferase H (315 aa).

S-adenosyl-L-methionine contacts are provided by residues 37–39, Asp57, Leu91, Asp105, and Gln112; that span reads GGH.

This sequence belongs to the methyltransferase superfamily. RsmH family.

The protein localises to the cytoplasm. The enzyme catalyses cytidine(1402) in 16S rRNA + S-adenosyl-L-methionine = N(4)-methylcytidine(1402) in 16S rRNA + S-adenosyl-L-homocysteine + H(+). In terms of biological role, specifically methylates the N4 position of cytidine in position 1402 (C1402) of 16S rRNA. This chain is Ribosomal RNA small subunit methyltransferase H, found in Syntrophus aciditrophicus (strain SB).